Consider the following 244-residue polypeptide: Carboxy-S-adenosyl-L-methionine synthase (244 aa).

Residues Tyr-40, 65–67 (GCS), 90–91 (DN), 119–120 (DL), Asn-134, and Arg-201 each bind S-adenosyl-L-methionine.

This sequence belongs to the class I-like SAM-binding methyltransferase superfamily. Cx-SAM synthase family. Homodimer.

The enzyme catalyses prephenate + S-adenosyl-L-methionine = carboxy-S-adenosyl-L-methionine + 3-phenylpyruvate + H2O. Functionally, catalyzes the conversion of S-adenosyl-L-methionine (SAM) to carboxy-S-adenosyl-L-methionine (Cx-SAM). This Geobacter metallireducens (strain ATCC 53774 / DSM 7210 / GS-15) protein is Carboxy-S-adenosyl-L-methionine synthase.